A 243-amino-acid polypeptide reads, in one-letter code: Leucyl/phenylalanyl-tRNA--protein transferase (243 aa).

The protein belongs to the L/F-transferase family.

The protein resides in the cytoplasm. The enzyme catalyses N-terminal L-lysyl-[protein] + L-leucyl-tRNA(Leu) = N-terminal L-leucyl-L-lysyl-[protein] + tRNA(Leu) + H(+). The catalysed reaction is N-terminal L-arginyl-[protein] + L-leucyl-tRNA(Leu) = N-terminal L-leucyl-L-arginyl-[protein] + tRNA(Leu) + H(+). It catalyses the reaction L-phenylalanyl-tRNA(Phe) + an N-terminal L-alpha-aminoacyl-[protein] = an N-terminal L-phenylalanyl-L-alpha-aminoacyl-[protein] + tRNA(Phe). In terms of biological role, functions in the N-end rule pathway of protein degradation where it conjugates Leu, Phe and, less efficiently, Met from aminoacyl-tRNAs to the N-termini of proteins containing an N-terminal arginine or lysine. In Xylella fastidiosa (strain 9a5c), this protein is Leucyl/phenylalanyl-tRNA--protein transferase.